The primary structure comprises 98 residues: NADH-ubiquinone oxidoreductase chain 4L (98 aa).

3 consecutive transmembrane segments (helical) span residues 1–21, 29–49, and 61–81; these read MSMV…GLLM, SLLC…LTIL, and IILL…LVMV.

The protein belongs to the complex I subunit 4L family. In terms of assembly, core subunit of respiratory chain NADH dehydrogenase (Complex I) which is composed of 45 different subunits.

Its subcellular location is the mitochondrion inner membrane. It catalyses the reaction a ubiquinone + NADH + 5 H(+)(in) = a ubiquinol + NAD(+) + 4 H(+)(out). Its function is as follows. Core subunit of the mitochondrial membrane respiratory chain NADH dehydrogenase (Complex I) which catalyzes electron transfer from NADH through the respiratory chain, using ubiquinone as an electron acceptor. Part of the enzyme membrane arm which is embedded in the lipid bilayer and involved in proton translocation. This chain is NADH-ubiquinone oxidoreductase chain 4L (MT-ND4L), found in Bos indicus (Zebu).